Here is a 295-residue protein sequence, read N- to C-terminus: MKDKIIRATAKNGMVRIIGGITTNLVNEGSKIHQCTPVAAAALGRMLTAGTLMGTTLKGEKEALTLKINGGGEAKGITVTAHNDASVKGFIGNPYVTRELNDKGKLDVGGAIGKDGLLYVIKDLGLKEPYVGQVPIYSGEIAEDFAYYFTVSEQTPSAVSLGVLVDKNLSIKAAGGFIVQMMPDADELLADLVTYRLEEIPPITTLISEGKSIEEILEFIFEGMDLNILDSIEPKYKCDCSREKVEKALASIGKNELQEIYDDGKNEEIVCNFCNTKYTFTTNDIDKLLKNSIKK.

Cystine bridges form between Cys238/Cys240 and Cys271/Cys274.

This sequence belongs to the HSP33 family. In terms of processing, under oxidizing conditions two disulfide bonds are formed involving the reactive cysteines. Under reducing conditions zinc is bound to the reactive cysteines and the protein is inactive.

It is found in the cytoplasm. In terms of biological role, redox regulated molecular chaperone. Protects both thermally unfolding and oxidatively damaged proteins from irreversible aggregation. Plays an important role in the bacterial defense system toward oxidative stress. This Clostridium botulinum (strain Eklund 17B / Type B) protein is 33 kDa chaperonin.